We begin with the raw amino-acid sequence, 702 residues long: Elongation factor G (702 aa).

The tr-type G domain occupies 8–290 (ERYRNIGISA…GVVEYLPSPV (283 aa)). Residues 17–24 (AHIDAGKT), 88–92 (DTPGH), and 142–145 (NKMD) contribute to the GTP site.

Belongs to the TRAFAC class translation factor GTPase superfamily. Classic translation factor GTPase family. EF-G/EF-2 subfamily.

It localises to the cytoplasm. Its function is as follows. Catalyzes the GTP-dependent ribosomal translocation step during translation elongation. During this step, the ribosome changes from the pre-translocational (PRE) to the post-translocational (POST) state as the newly formed A-site-bound peptidyl-tRNA and P-site-bound deacylated tRNA move to the P and E sites, respectively. Catalyzes the coordinated movement of the two tRNA molecules, the mRNA and conformational changes in the ribosome. The sequence is that of Elongation factor G from Janthinobacterium sp. (strain Marseille) (Minibacterium massiliensis).